The primary structure comprises 515 residues: Organic cation/carnitine transporter 5 (515 aa).

At 1-43 the chain is on the cytoplasmic side; it reads MADSLAPLLPTHIEEDEDTSSPLTFDKILEKSLSDFGFSQFLQ. A helical transmembrane segment spans residues 44–64; the sequence is IVLVGLALTFDSQQIFITVFT. Residues 65–124 lie on the Extracellular side of the membrane; that stretch reads DAYPTWHCLDHTICNPATTDICKIPRSAWDWDGGFKGKSVISEFDLECSSSFLRSLPSST. Residues 125–145 form a helical membrane-spanning segment; sequence FYVGSIVGGVVLAMIPDGSLG. Residues 146–149 are Cytoplasmic-facing; it reads RKQL. Residues 150–172 form a helical membrane-spanning segment; it reads LFFSSFAMSLTGISIFLSSNIWI. At 173 to 177 the chain is on the extracellular side; the sequence is YSFLK. Residues 178-195 traverse the membrane as a helical segment; that stretch reads FVIGFARSQTGTYALVLI. 195–202 lines the ATP pocket; it reads ISERISTK. The Cytoplasmic segment spans residues 196–208; the sequence is SERISTKWRPRAT. The helical transmembrane segment at 209–229 threads the bilayer; sequence MVPFTLFVLGFMSLSGIAYLV. Residues 230–235 are Extracellular-facing; the sequence is RHASWK. The helical transmembrane segment at 236-256 threads the bilayer; it reads VLYLCTSIPAGIHSIFIYFFA. The Cytoplasmic portion of the chain corresponds to 257 to 320; that stretch reads LESPRWLHLE…LFIIKWAFRR (64 aa). Residues 321–341 form a helical membrane-spanning segment; it reads VTLVMIIMFGLGMSYYGVPLA. The Extracellular portion of the chain corresponds to 342-350; it reads VRDIKVNIY. A helical membrane pass occupies residues 351–371; it reads MSEALNAMVELPTFVVTPILL. Over 372-379 the chain is Cytoplasmic; sequence EQFSRRSS. A helical transmembrane segment spans residues 380–400; that stretch reads VLVNCLIGGASGVLCFVMSLY. The Extracellular segment spans residues 401-411; sequence GRTKIAFALEL. A helical transmembrane segment spans residues 412–432; it reads GSFFCARIGFNLMAIYLVELF. At 433–441 the chain is on the cytoplasmic side; that stretch reads PTCVRNSAT. A helical membrane pass occupies residues 442-462; the sequence is MMLRQALVVGGACCPLIASLG. Topologically, residues 463 to 467 are extracellular; sequence RNVPS. A helical transmembrane segment spans residues 468 to 488; sequence LSFAVFGFAMSGLGLFALLLP. Residues 489–515 are Cytoplasmic-facing; the sequence is ETKGLSLCDTMEEQEQRDQALKTSHSC.

This sequence belongs to the major facilitator (TC 2.A.1) superfamily. Organic cation transporter (TC 2.A.1.19) family. Mostly expressed in leaves and siliques, and, to a lower extent, in roots, stems and flowers.

The protein resides in the vacuole membrane. Functionally, high affinity carnitine transporter involved in the active cellular uptake of carnitine. Also transports organic cations. This is Organic cation/carnitine transporter 5 (OCT5) from Arabidopsis thaliana (Mouse-ear cress).